The following is a 353-amino-acid chain: MTIALGKFTKDEKDLFDIMDDWLRRDRFVFVGWSGLLLFPCAYFALGGWFTGTTFVTSWYTHGLASSYLEGCNFLTAAVSTPANSLAHSLLLLWGPKAQGDFTRWCQLGGLWAFVALHGAFALIGFMLRQFELARSVQLRPYNAIAFSGPIAVFVSVFLIYPLGQSGWFFAPSFGVAAIFRFILFFQGFHNWTLNPFHMMGVAGVLGAALLCAIHGATVENTLFEDGDGANTFRAFNPTQAEETYSMVTANRFWSQIFGVAFSNKRWLHFFMLFVPVTGLWMSALGVVGLALNLRAYDFVSQEIRAAEDPEFETFYTKNILLNEGIRAWMAAQDQPHENLIFPEEVLPRGNAL.

Thr2 bears the N-acetylthreonine mark. Thr2 is modified (phosphothreonine). The chain crosses the membrane as a helical span at residues 41–61 (CAYFALGGWFTGTTFVTSWYT). His118 serves as a coordination point for chlorophyll a. Residues 125–141 (GFMLRQFELARSVQLRP) form a helical membrane-spanning segment. Pheophytin a contacts are provided by Gln130 and Asn143. Residues 153–166 (VFVSVFLIYPLGQS) traverse the membrane as a helical segment. Residue His198 coordinates chlorophyll a. The chain crosses the membrane as a helical span at residues 208–228 (AALLCAIHGATVENTLFEDGD). A plastoquinone contacts are provided by His215 and Phe262. His215 contributes to the Fe cation binding site. Residue His269 coordinates Fe cation. The chain crosses the membrane as a helical span at residues 279–295 (GLWMSALGVVGLALNLR).

The protein belongs to the reaction center PufL/M/PsbA/D family. In terms of assembly, PSII is composed of 1 copy each of membrane proteins PsbA, PsbB, PsbC, PsbD, PsbE, PsbF, PsbH, PsbI, PsbJ, PsbK, PsbL, PsbM, PsbT, PsbX, PsbY, PsbZ, Psb30/Ycf12, at least 3 peripheral proteins of the oxygen-evolving complex and a large number of cofactors. It forms dimeric complexes. The cofactor is The D1/D2 heterodimer binds P680, chlorophylls that are the primary electron donor of PSII, and subsequent electron acceptors. It shares a non-heme iron and each subunit binds pheophytin, quinone, additional chlorophylls, carotenoids and lipids. There is also a Cl(-1) ion associated with D1 and D2, which is required for oxygen evolution. The PSII complex binds additional chlorophylls, carotenoids and specific lipids..

It localises to the plastid. It is found in the chloroplast thylakoid membrane. It carries out the reaction 2 a plastoquinone + 4 hnu + 2 H2O = 2 a plastoquinol + O2. Functionally, photosystem II (PSII) is a light-driven water:plastoquinone oxidoreductase that uses light energy to abstract electrons from H(2)O, generating O(2) and a proton gradient subsequently used for ATP formation. It consists of a core antenna complex that captures photons, and an electron transfer chain that converts photonic excitation into a charge separation. The D1/D2 (PsbA/PsbD) reaction center heterodimer binds P680, the primary electron donor of PSII as well as several subsequent electron acceptors. D2 is needed for assembly of a stable PSII complex. The chain is Photosystem II D2 protein from Barbarea verna (Land cress).